The primary structure comprises 430 residues: Histidine--tRNA ligase (430 aa).

The protein belongs to the class-II aminoacyl-tRNA synthetase family. In terms of assembly, homodimer.

The protein localises to the cytoplasm. The catalysed reaction is tRNA(His) + L-histidine + ATP = L-histidyl-tRNA(His) + AMP + diphosphate + H(+). In Lactococcus lactis subsp. cremoris (strain MG1363), this protein is Histidine--tRNA ligase.